We begin with the raw amino-acid sequence, 337 residues long: MRLSITLIFTLIVLSISFISAGNVFSHKQYQDSFIDWMRSNNKAYTHKEFMPRYEEFKKNMDYVHNWNSKGSKTVLGLNQHADLSNEEYRLNYLGTRAHIKLNGYHKRNLGLRLNRPQFKQPLNVDWREKDAVTPVKDQGQCGSCYSFSTTGSVEGVTAIKTGKLVSLSEQNILDCSSSFGNEGCNGGLMTNAFEYIIKNNGLNSEEQYPYEMKVNDECKFQEGSVAAKITSYKEIEAGDENDLQNALLLNPVSVAIDASHNSFQLYTAGVYYEPACSSEDLDHGVLAVGMGTDNGEDYYIVKNSWGPSWGLNGYIHMARNKDNNCGISTMASYPIA.

The N-terminal stretch at Met1 to Ala21 is a signal peptide. Residues Gly22–Lys120 constitute a propeptide, activation peptide. 3 cysteine pairs are disulfide-bonded: Cys142-Cys185, Cys176-Cys219, and Cys277-Cys326. Cys145 is an active-site residue. Residues His284 and Asn304 contribute to the active site.

Belongs to the peptidase C1 family.

The protein resides in the lysosome. This is Cysteine proteinase 3 (cprC) from Dictyostelium discoideum (Social amoeba).